Consider the following 259-residue polypeptide: Ribosomal RNA small subunit methyltransferase J (259 aa).

S-adenosyl-L-methionine contacts are provided by residues 101–102 (RD), 117–118 (ER), 153–154 (SS), and D176.

This sequence belongs to the methyltransferase superfamily. RsmJ family.

It is found in the cytoplasm. The enzyme catalyses guanosine(1516) in 16S rRNA + S-adenosyl-L-methionine = N(2)-methylguanosine(1516) in 16S rRNA + S-adenosyl-L-homocysteine + H(+). Functionally, specifically methylates the guanosine in position 1516 of 16S rRNA. The sequence is that of Ribosomal RNA small subunit methyltransferase J from Aliivibrio fischeri (strain MJ11) (Vibrio fischeri).